A 1295-amino-acid polypeptide reads, in one-letter code: DNA (cytosine-5)-methyltransferase CMT2 (1295 aa).

Disordered regions lie at residues 1-23 (MLSPAKCESEEAQAPLDLHSSSR), 61-91 (RRSTTLNCNSPEENGGEGRVSQRKSSRGKSQ), and 249-287 (NSSKQSLGSNKRMRRSQRFMKGTENEGEENLGKSKGKGM). Over residues 61-72 (RRSTTLNCNSPE) the composition is skewed to polar residues. One can recognise a BAH domain in the interval 578–693 (HTFSLGDFAY…VEYSTFQTLR (116 aa)). Residues 727–1268 (LPVLDLYSGC…YSLGMAFRGL (542 aa)) enclose the SAM-dependent MTase C5-type domain. The disordered stretch occupies residues 814-835 (SVNSTKETSGSSSSSDDDSDSE). In terms of domain architecture, Chromo spans 837–902 (YEVEKLVDIC…SGFKSKILPL (66 aa)). Cysteine 915 is a catalytic residue.

It belongs to the class I-like SAM-binding methyltransferase superfamily. C5-methyltransferase family.

It localises to the nucleus. The enzyme catalyses a 2'-deoxycytidine in DNA + S-adenosyl-L-methionine = a 5-methyl-2'-deoxycytidine in DNA + S-adenosyl-L-homocysteine + H(+). May be involved in the CpXpG methylation and in gene silencing. The polypeptide is DNA (cytosine-5)-methyltransferase CMT2 (CMT2) (Arabidopsis thaliana (Mouse-ear cress)).